Consider the following 1048-residue polypeptide: Probable inactive receptor kinase At5g10020 (1048 aa).

Positions 1-21 (MSHFLTFCFLSLLLLLHGANA) are cleaved as a signal peptide. LRR repeat units lie at residues 100-120 (RLRN…PSLG), 124-146 (SLQH…ISEL), 148-169 (SLNH…GFRN), 172-194 (QLRS…FTEL), 196-217 (NVEF…PMEN), 224-246 (TLRH…ESIG), 250-272 (NLEI…GSQP), 273-294 (SLRI…ELLQ), 298-319 (PLLE…INSS), 320-342 (TLTM…FKSC), 365-387 (TPDV…TSAF), 389-411 (RLSV…WGDS), 412-433 (QFSV…SFFT), 436-457 (SLRS…RGSR), 469-491 (QMEL…IGTM), 493-516 (KIKV…NKLS), 517-539 (GLLF…LPSQ), and 540-560 (MVGF…DLRS). A helical transmembrane segment spans residues 602–622 (IAIIVASVGAAIMILFVLFAY). The segment at 696-733 (EQGAPATSAPTNLLDDYPAASGRKSSSGGSPLSSSPRF) is disordered. The span at 716–733 (SGRKSSSGGSPLSSSPRF) shows a compositional bias: low complexity. Position 744 is a phosphoserine (serine 744). A Protein kinase domain is found at 768 to 1045 (RAPAEVLGRS…IRQVLDHLTS (278 aa)). Residues 774–782 (LGRSSHGTL) and lysine 796 each bind ATP.

It belongs to the protein kinase superfamily.

The protein localises to the membrane. The protein is Probable inactive receptor kinase At5g10020 of Arabidopsis thaliana (Mouse-ear cress).